Reading from the N-terminus, the 312-residue chain is DNA-directed RNA polymerase subunit alpha (312 aa).

Residues 1–226 are alpha N-terminal domain (alpha-NTD); sequence MIEFEKPNIT…EHFKVFMSTD (226 aa). The tract at residues 243–312 is alpha C-terminal domain (alpha-CTD); that stretch reads NEKKLEMTIE…DLGLSLRQDD (70 aa).

The protein belongs to the RNA polymerase alpha chain family. Homodimer. The RNAP catalytic core consists of 2 alpha, 1 beta, 1 beta' and 1 omega subunit. When a sigma factor is associated with the core the holoenzyme is formed, which can initiate transcription.

The catalysed reaction is RNA(n) + a ribonucleoside 5'-triphosphate = RNA(n+1) + diphosphate. DNA-dependent RNA polymerase catalyzes the transcription of DNA into RNA using the four ribonucleoside triphosphates as substrates. The sequence is that of DNA-directed RNA polymerase subunit alpha from Lactobacillus johnsonii (strain CNCM I-12250 / La1 / NCC 533).